The chain runs to 116 residues: Ribonuclease P protein component (116 aa).

Belongs to the RnpA family. As to quaternary structure, consists of a catalytic RNA component (M1 or rnpB) and a protein subunit.

It catalyses the reaction Endonucleolytic cleavage of RNA, removing 5'-extranucleotides from tRNA precursor.. Functionally, RNaseP catalyzes the removal of the 5'-leader sequence from pre-tRNA to produce the mature 5'-terminus. It can also cleave other RNA substrates such as 4.5S RNA. The protein component plays an auxiliary but essential role in vivo by binding to the 5'-leader sequence and broadening the substrate specificity of the ribozyme. The sequence is that of Ribonuclease P protein component from Acholeplasma laidlawii (strain PG-8A).